The following is a 165-amino-acid chain: Ribosomal RNA large subunit methyltransferase H (165 aa).

Gly-109 provides a ligand contact to S-adenosyl-L-methionine.

Belongs to the RNA methyltransferase RlmH family. In terms of assembly, homodimer.

It localises to the cytoplasm. The enzyme catalyses pseudouridine(1915) in 23S rRNA + S-adenosyl-L-methionine = N(3)-methylpseudouridine(1915) in 23S rRNA + S-adenosyl-L-homocysteine + H(+). Functionally, specifically methylates the pseudouridine at position 1915 (m3Psi1915) in 23S rRNA. The polypeptide is Ribosomal RNA large subunit methyltransferase H (Methylorubrum extorquens (strain CM4 / NCIMB 13688) (Methylobacterium extorquens)).